Consider the following 201-residue polypeptide: MAKLLYIKANPKSNQSSRTFIISEHFIKVYKEFHPNDQIITLDLYKEGIHFLSQEDINDIFAPKTEASKHHHILKYAYQFAEADKYVFAAPMWNLGIPAILKAYIDYITVSGITFKYTEQGAVGLLRGKKAVHIMATGGEYKTLPFSDFEMANRYLKTILGFMGVEDFKTITAQRLDIVGEDVEKIMFTALKEAEEIAKGF.

Position 92 to 95 (92 to 95) interacts with FMN; sequence MWNL.

It belongs to the azoreductase type 1 family. In terms of assembly, homodimer. It depends on FMN as a cofactor.

It carries out the reaction 2 a quinone + NADH + H(+) = 2 a 1,4-benzosemiquinone + NAD(+). The catalysed reaction is N,N-dimethyl-1,4-phenylenediamine + anthranilate + 2 NAD(+) = 2-(4-dimethylaminophenyl)diazenylbenzoate + 2 NADH + 2 H(+). In terms of biological role, quinone reductase that provides resistance to thiol-specific stress caused by electrophilic quinones. Its function is as follows. Also exhibits azoreductase activity. Catalyzes the reductive cleavage of the azo bond in aromatic azo compounds to the corresponding amines. This chain is FMN-dependent NADH:quinone oxidoreductase, found in Caldicellulosiruptor bescii (strain ATCC BAA-1888 / DSM 6725 / KCTC 15123 / Z-1320) (Anaerocellum thermophilum).